Reading from the N-terminus, the 179-residue chain is Acireductone dioxygenase (179 aa).

H100, H102, E106, and H145 together coordinate Fe(2+). 4 residues coordinate Ni(2+): H100, H102, E106, and H145.

The protein belongs to the acireductone dioxygenase (ARD) family. As to quaternary structure, monomer. Requires Fe(2+) as cofactor. It depends on Ni(2+) as a cofactor.

It carries out the reaction 1,2-dihydroxy-5-(methylsulfanyl)pent-1-en-3-one + O2 = 3-(methylsulfanyl)propanoate + CO + formate + 2 H(+). The catalysed reaction is 1,2-dihydroxy-5-(methylsulfanyl)pent-1-en-3-one + O2 = 4-methylsulfanyl-2-oxobutanoate + formate + 2 H(+). The protein operates within amino-acid biosynthesis; L-methionine biosynthesis via salvage pathway; L-methionine from S-methyl-5-thio-alpha-D-ribose 1-phosphate: step 5/6. Its function is as follows. Catalyzes 2 different reactions between oxygen and the acireductone 1,2-dihydroxy-3-keto-5-methylthiopentene (DHK-MTPene) depending upon the metal bound in the active site. Fe-containing acireductone dioxygenase (Fe-ARD) produces formate and 2-keto-4-methylthiobutyrate (KMTB), the alpha-ketoacid precursor of methionine in the methionine recycle pathway. Ni-containing acireductone dioxygenase (Ni-ARD) produces methylthiopropionate, carbon monoxide and formate, and does not lie on the methionine recycle pathway. This chain is Acireductone dioxygenase, found in Bacillus licheniformis (strain ATCC 14580 / DSM 13 / JCM 2505 / CCUG 7422 / NBRC 12200 / NCIMB 9375 / NCTC 10341 / NRRL NRS-1264 / Gibson 46).